A 133-amino-acid chain; its full sequence is Oocytes ribonuclease (133 aa).

The signal sequence occupies residues 1–22; it reads MCAKSLLLVFGILLGLSHLSLS. The residue at position 23 (Gln23) is a Pyrrolidone carboxylic acid. Residue His32 is the Proton acceptor of the active site. Disulfide bonds link Cys41-Cys93, Cys56-Cys103, Cys74-Cys118, and Cys115-Cys132. 57-61 serves as a coordination point for substrate; sequence KRVNT. Catalysis depends on His125, which acts as the Proton donor.

Belongs to the pancreatic ribonuclease family. Monomer.

Its subcellular location is the secreted. Its function is as follows. Preferentially cleaves single-stranded RNA at pyrimidine residues with a 3'flanking guanine. Hydrolyzes poly(U) and poly(C) as substrates, and prefers the former. The S-lectins in frog eggs may be involved in the fertilization and development of the frog embryo. This lectin agglutinates various animal cells, including normal lymphocytes, erythrocytes, and fibroblasts of animal and human origin. It is cytotoxic against several tumor cells. The chain is Oocytes ribonuclease (RCR) from Aquarana catesbeiana (American bullfrog).